A 70-amino-acid polypeptide reads, in one-letter code: Putative membrane protein insertion efficiency factor (70 aa).

The protein belongs to the UPF0161 family.

It localises to the cell membrane. Functionally, could be involved in insertion of integral membrane proteins into the membrane. The sequence is that of Putative membrane protein insertion efficiency factor from Finegoldia magna (strain ATCC 29328 / DSM 20472 / WAL 2508) (Peptostreptococcus magnus).